The sequence spans 1848 residues: Unconventional myosin-Vb (1848 aa).

An N-acetylmethionine modification is found at methionine 1. Positions 8 to 60 constitute a Myosin N-terminal SH3-like domain; it reads SQCTRVWIPDPDEVWRSAELTKDYKEGDKSLQLRLEDETILEYPIDVQRNQLP. The segment at 21 to 40 is requires for interaction with LIMA1; that stretch reads VWRSAELTKDYKEGDKSLQL. Positions 69–761 constitute a Myosin motor domain; sequence VGENDLTALS…QVAYLEKLRA (693 aa). Residue 163–170 coordinates ATP; the sequence is GESGAGKT. A disordered region spans residues 596-630; it reads KDPVPATTPGKGSSSKISVRSARPPMKVSNKEHKK. Residues 640–662 are actin-binding; sequence LHLLMETLNATTPHYVRCIKPND. 6 IQ domains span residues 769–798, 792–821, 817–848, 840–869, 865–896, and 888–917; these read IMIQKTVRGWLQKVKYHRLKGATLTLQRYC, LTLQRYCRGHLARRLAEHLRRIRAAVVLQK, VVLQKHYRMQRARQAYQRVRRAAVVIQAFTRA, VVIQAFTRAMFVRRTYRQVLMEHKATTIQK, TTIQKHVRGWMARRHFQRLRDAAIVIQCAFRM, and IVIQCAFRMLKARRELKALRIEARSAEHLK. 2 coiled-coil regions span residues 899–1266 and 1341–1471; these read ARRE…ILRT and RLLE…GMLE. Disordered stretches follow at residues 1093–1123 and 1166–1192; these read QTPGHRRNPSNQSSLESDSNYPSISTSEIGD and QLEKREQQDSKKVQAEPPQTDIDLDPN. A compositionally biased stretch (polar residues) spans 1101–1121; sequence PSNQSSLESDSNYPSISTSEI. The segment covering 1166–1179 has biased composition (basic and acidic residues); sequence QLEKREQQDSKKVQ. A Phosphoserine modification is found at serine 1446. One can recognise a Dilute domain in the interval 1526-1803; sequence TSTINGIKKV…IRTIQAQLQE (278 aa).

It belongs to the TRAFAC class myosin-kinesin ATPase superfamily. Myosin family. In terms of assembly, component of the CART complex, at least composed of ACTN4, HGS/HRS, MYO5B and TRIM3. Interacts with RAB11FIP2, RAB11A, and RAB8A. Found in a complex with CFTR and RAB11A. Interacts with NPC1L1;. Interacts with LIMA1.

The protein resides in the cytoplasm. Functionally, may be involved in vesicular trafficking via its association with the CART complex. The CART complex is necessary for efficient transferrin receptor recycling but not for EGFR degradation. Required in a complex with RAB11A and RAB11FIP2 for the transport of NPC1L1 to the plasma membrane. Together with RAB11A participates in CFTR trafficking to the plasma membrane and TF (transferrin) recycling in nonpolarized cells. Together with RAB11A and RAB8A participates in epithelial cell polarization. Together with RAB25 regulates transcytosis. Required for proper localization of bile salt export pump ABCB11 at the apical/canalicular plasma membrane of hepatocytes. In Homo sapiens (Human), this protein is Unconventional myosin-Vb (MYO5B).